Reading from the N-terminus, the 521-residue chain is Ribonuclease Y (521 aa).

The helical transmembrane segment at 5-25 (LLLILTAVIMLIVGFAVGAIL) threads the bilayer. The tract at residues 77 to 107 (ELKDRRGEVQKQENRLIQREETMDRKDATLD) is disordered. The region spanning 211 to 271 (TVTVVTLPND…IRREIARMTL (61 aa)) is the KH domain. The 94-residue stretch at 337-430 (VLNHSIEVAK…VAASDAISAA (94 aa)) folds into the HD domain.

The protein belongs to the RNase Y family.

Its subcellular location is the cell membrane. Its function is as follows. Endoribonuclease that initiates mRNA decay. The polypeptide is Ribonuclease Y (Latilactobacillus sakei subsp. sakei (strain 23K) (Lactobacillus sakei subsp. sakei)).